The sequence spans 253 residues: DnaJ homolog subfamily C member 8 (253 aa).

At alanine 2 the chain carries N-acetylalanine. A Phosphoserine modification is found at serine 35. A J domain is found at 57-124; that stretch reads NPFEVLQIDP…QKKRALDVIQ (68 aa). Lysine 146 bears the N6-acetyllysine mark. Residues 181–222 are compositionally biased toward basic and acidic residues; that stretch reads EAKEMHERKRQREEEIEAQEKAKREREWQKNFEESRDGRVDS. The tract at residues 181 to 253 is disordered; the sequence is EAKEMHERKR…PPKVKMEQRE (73 aa). 2 short sequence motifs (nuclear localization signal) span residues 189-192 and 203-206; these read KRQR and KRER. Position 222 is a phosphoserine (serine 222). Basic residues predominate over residues 231-240; sequence KGKKEKKNRT. Residues 232 to 253 are essential for polyglutamine aggregation suppression; sequence GKKEKKNRTFLRPPKVKMEQRE.

In terms of assembly, interacts with SRPK1. Interacts with HSP70 (HSPA1A or HSPA1B).

Its subcellular location is the nucleus. In terms of biological role, suppresses polyglutamine (polyQ) aggregation of ATXN3 in neuronal cells. The protein is DnaJ homolog subfamily C member 8 (Dnajc8) of Mus musculus (Mouse).